Consider the following 197-residue polypeptide: Large ribosomal subunit protein bL17 (197 aa).

The tract at residues 136 to 197 (RAAKKADAPQ…DAEKSSDTEK (62 aa)) is disordered. Positions 148–187 (VADEATDADESVEDEAPAQDDSADEVEAAADETPADDAEA) are enriched in acidic residues. Over residues 188 to 197 (DAEKSSDTEK) the composition is skewed to basic and acidic residues.

This sequence belongs to the bacterial ribosomal protein bL17 family. Part of the 50S ribosomal subunit. Contacts protein L32.

This chain is Large ribosomal subunit protein bL17, found in Beutenbergia cavernae (strain ATCC BAA-8 / DSM 12333 / CCUG 43141 / JCM 11478 / NBRC 16432 / NCIMB 13614 / HKI 0122).